The sequence spans 330 residues: Holliday junction branch migration complex subunit RuvB (330 aa).

Positions 1–181 (MEDRLVGCRL…FGVINKLELY (181 aa)) are large ATPase domain (RuvB-L). ATP-binding positions include Leu-20, Arg-21, Gly-62, Lys-65, Thr-66, Thr-67, 128 to 130 (EDY), Arg-171, Tyr-181, and Arg-218. A Mg(2+)-binding site is contributed by Thr-66. A small ATPAse domain (RuvB-S) region spans residues 182–252 (SVEELGQIVK…IARTGLEALE (71 aa)). Residues 255 to 330 (EIGLDAVDRN…AYEHFGLKYE (76 aa)) form a head domain (RuvB-H) region. 2 residues coordinate DNA: Lys-310 and Arg-315.

Belongs to the RuvB family. Homohexamer. Forms an RuvA(8)-RuvB(12)-Holliday junction (HJ) complex. HJ DNA is sandwiched between 2 RuvA tetramers; dsDNA enters through RuvA and exits via RuvB. An RuvB hexamer assembles on each DNA strand where it exits the tetramer. Each RuvB hexamer is contacted by two RuvA subunits (via domain III) on 2 adjacent RuvB subunits; this complex drives branch migration. In the full resolvosome a probable DNA-RuvA(4)-RuvB(12)-RuvC(2) complex forms which resolves the HJ.

Its subcellular location is the cytoplasm. The enzyme catalyses ATP + H2O = ADP + phosphate + H(+). Its function is as follows. The RuvA-RuvB-RuvC complex processes Holliday junction (HJ) DNA during genetic recombination and DNA repair, while the RuvA-RuvB complex plays an important role in the rescue of blocked DNA replication forks via replication fork reversal (RFR). RuvA specifically binds to HJ cruciform DNA, conferring on it an open structure. The RuvB hexamer acts as an ATP-dependent pump, pulling dsDNA into and through the RuvAB complex. RuvB forms 2 homohexamers on either side of HJ DNA bound by 1 or 2 RuvA tetramers; 4 subunits per hexamer contact DNA at a time. Coordinated motions by a converter formed by DNA-disengaged RuvB subunits stimulates ATP hydrolysis and nucleotide exchange. Immobilization of the converter enables RuvB to convert the ATP-contained energy into a lever motion, pulling 2 nucleotides of DNA out of the RuvA tetramer per ATP hydrolyzed, thus driving DNA branch migration. The RuvB motors rotate together with the DNA substrate, which together with the progressing nucleotide cycle form the mechanistic basis for DNA recombination by continuous HJ branch migration. Branch migration allows RuvC to scan DNA until it finds its consensus sequence, where it cleaves and resolves cruciform DNA. The polypeptide is Holliday junction branch migration complex subunit RuvB (Acetivibrio thermocellus (strain ATCC 27405 / DSM 1237 / JCM 9322 / NBRC 103400 / NCIMB 10682 / NRRL B-4536 / VPI 7372) (Clostridium thermocellum)).